The chain runs to 183 residues: Bifunctional protein PyrR (183 aa).

A PRPP-binding motif is present at residues 98–110; it reads VVLVDDVLYTGRT.

It belongs to the purine/pyrimidine phosphoribosyltransferase family. PyrR subfamily.

The catalysed reaction is UMP + diphosphate = 5-phospho-alpha-D-ribose 1-diphosphate + uracil. Regulates the transcription of the pyrimidine nucleotide (pyr) operon in response to exogenous pyrimidines. In terms of biological role, also displays a weak uracil phosphoribosyltransferase activity which is not physiologically significant. This chain is Bifunctional protein PyrR, found in Roseiflexus sp. (strain RS-1).